Here is a 636-residue protein sequence, read N- to C-terminus: PTS system beta-glucoside-specific EIIBCA component (636 aa).

One can recognise a PTS EIIB type-1 domain in the interval 1–86 (MKYEQLAKDI…VEIGGFQNQA (86 aa)). Cysteine 26 serves as the catalytic Phosphocysteine intermediate; for EIIB activity. The next 10 membrane-spanning stretches (helical) occupy residues 104 to 124 (IDII…TGMI), 146 to 166 (LLHA…GYTA), 172 to 192 (ATPF…LVVL), 215 to 235 (FLGI…IILA), 258 to 278 (LVPF…IGPI), 299 to 319 (IIAG…GLHW), 337 to 357 (VLAM…AVWL), 369 to 389 (VPAF…GVTL), 407 to 427 (AIIG…IFGI), and 444 to 464 (IVIA…LFGL). The 372-residue stretch at 105–476 (DIIASIFTPV…GNASDEQTET (372 aa)) folds into the PTS EIIC type-1 domain. Positions 472–492 (EQTETKAHTSTGTGEKEEISS) are disordered. A PTS EIIA type-1 domain is found at 506–610 (DEAFSSGALG…AVTTPVIVTN (105 aa)). Residue histidine 558 is the Tele-phosphohistidine intermediate; for EIIA activity of the active site.

The protein localises to the cell membrane. The phosphoenolpyruvate-dependent sugar phosphotransferase system (sugar PTS), a major carbohydrate active -transport system, catalyzes the phosphorylation of incoming sugar substrates concomitantly with their translocation across the cell membrane. This system is involved in beta-glucoside transport. The polypeptide is PTS system beta-glucoside-specific EIIBCA component (bglP) (Halalkalibacterium halodurans (strain ATCC BAA-125 / DSM 18197 / FERM 7344 / JCM 9153 / C-125) (Bacillus halodurans)).